The chain runs to 340 residues: NADH-quinone oxidoreductase subunit H (340 aa).

9 helical membrane-spanning segments follow: residues 3 to 23, 69 to 89, 102 to 122, 127 to 147, 154 to 174, 186 to 206, 248 to 268, 274 to 294, and 312 to 332; these read LVGMVALMVGVLVSVAYLVYM, WAFFAAPVITFALALAGWAVI, VVVMPYVVADLNLGVLYVLAI, VYGIIMAGWASGSNYAFLGAI, ISYEMSMGLVMLSVSLCAGSL, MPYWMDLLLLPMAGVFFVSML, ILVSAMMVVLFLGGWYPPLNI, IPGFVWFCSKVFLLLFCFIWV, and KVFLPFSFVWVMVISGVLLWV.

The protein belongs to the complex I subunit 1 family. NDH-1 is composed of 14 different subunits. Subunits NuoA, H, J, K, L, M, N constitute the membrane sector of the complex.

The protein resides in the cell inner membrane. It carries out the reaction a quinone + NADH + 5 H(+)(in) = a quinol + NAD(+) + 4 H(+)(out). Functionally, NDH-1 shuttles electrons from NADH, via FMN and iron-sulfur (Fe-S) centers, to quinones in the respiratory chain. The immediate electron acceptor for the enzyme in this species is believed to be ubiquinone. Couples the redox reaction to proton translocation (for every two electrons transferred, four hydrogen ions are translocated across the cytoplasmic membrane), and thus conserves the redox energy in a proton gradient. This subunit may bind ubiquinone. The chain is NADH-quinone oxidoreductase subunit H from Anaplasma phagocytophilum (strain HZ).